The chain runs to 409 residues: 3-dehydro-bile acid delta(4,6)-reductase (409 aa).

FAD-binding residues include Ser12, Glu33, Val131, Glu378, Asn390, and Leu391.

It belongs to the BaiN/RdsA family. BaiN subfamily. FAD serves as cofactor.

The catalysed reaction is 3-oxocholan-24-oyl-CoA + NAD(+) = 3-oxochol-4-en-24-oyl-CoA + NADH + H(+). The enzyme catalyses 3-oxochol-4-en-24-oyl-CoA + NAD(+) = 3-oxochol-4,6-dien-24-oyl-CoA + NADH + H(+). It carries out the reaction 12alpha-hydroxy-3-oxocholan-24-oyl-CoA + NAD(+) = 12alpha-hydroxy-3-oxochol-4-en-24-oyl-CoA + NADH + H(+). It catalyses the reaction 12alpha-hydroxy-3-oxochol-4-en-24-oyl-CoA + NAD(+) = 12alpha-hydroxy-3-oxochola-4,6-dien-24-oyl-CoA + NADH + H(+). Its pathway is lipid metabolism; bile acid degradation. In terms of biological role, involved in the secondary bile acid metabolism. Catalyzes two subsequent reductions of the double bonds within the bile acid A/B rings of 3-oxochol-4,6-dien-24-oyl-CoA and 12alpha-hydroxy-3-oxochol-4,6-dien-24-oyl-CoA to yield 3-oxocholan-24-oyl-CoA and 12alpha-hydroxy-3-oxocholan-24-oyl-CoA, respectively. The chain is 3-dehydro-bile acid delta(4,6)-reductase from Clostridium scindens (strain ATCC 35704 / DSM 5676 / VPI 13733 / 19).